We begin with the raw amino-acid sequence, 101 residues long: Replication restart protein PriB (101 aa).

An SSB domain is found at 1–101 (MTTNNLVLAG…LHAENVELKT (101 aa)).

The protein belongs to the PriB family. In terms of assembly, homodimer. Interacts with PriA and DnaT. Component of the replication restart primosome. Primosome assembly occurs via a 'hand-off' mechanism. PriA binds to replication forks, subsequently PriB then DnaT bind; DnaT then displaces ssDNA to generate the helicase loading substrate.

Functionally, involved in the restart of stalled replication forks, which reloads the replicative helicase on sites other than the origin of replication; the PriA-PriB pathway is the major replication restart pathway. During primosome assembly it facilitates complex formation between PriA and DnaT on DNA; stabilizes PriA on DNA. Stimulates the DNA unwinding activity of PriA helicase. This is Replication restart protein PriB from Shewanella pealeana (strain ATCC 700345 / ANG-SQ1).